A 349-amino-acid polypeptide reads, in one-letter code: Aspartate carbamoyltransferase catalytic subunit (349 aa).

Carbamoyl phosphate is bound by residues Arg59 and Thr60. L-aspartate is bound at residue Lys87. Carbamoyl phosphate is bound by residues Arg109, His142, and Gln145. 2 residues coordinate L-aspartate: Arg182 and Arg253. Carbamoyl phosphate is bound by residues Gly294 and Pro295.

Belongs to the aspartate/ornithine carbamoyltransferase superfamily. ATCase family. In terms of assembly, heterododecamer (2C3:3R2) of six catalytic PyrB chains organized as two trimers (C3), and six regulatory PyrI chains organized as three dimers (R2).

The enzyme catalyses carbamoyl phosphate + L-aspartate = N-carbamoyl-L-aspartate + phosphate + H(+). The protein operates within pyrimidine metabolism; UMP biosynthesis via de novo pathway; (S)-dihydroorotate from bicarbonate: step 2/3. Catalyzes the condensation of carbamoyl phosphate and aspartate to form carbamoyl aspartate and inorganic phosphate, the committed step in the de novo pyrimidine nucleotide biosynthesis pathway. This chain is Aspartate carbamoyltransferase catalytic subunit, found in Synechococcus sp. (strain CC9311).